Consider the following 358-residue polypeptide: Phenylalanine--tRNA ligase alpha subunit (358 aa).

Glu262 is a Mg(2+) binding site.

It belongs to the class-II aminoacyl-tRNA synthetase family. Phe-tRNA synthetase alpha subunit type 1 subfamily. In terms of assembly, tetramer of two alpha and two beta subunits. Mg(2+) is required as a cofactor.

Its subcellular location is the cytoplasm. It carries out the reaction tRNA(Phe) + L-phenylalanine + ATP = L-phenylalanyl-tRNA(Phe) + AMP + diphosphate + H(+). This chain is Phenylalanine--tRNA ligase alpha subunit (pheS), found in Streptomyces coelicolor (strain ATCC BAA-471 / A3(2) / M145).